A 143-amino-acid polypeptide reads, in one-letter code: Cytotoxic L-amino-acid oxidase (143 aa).

The protein belongs to the flavin monoamine oxidase family. It depends on FAD as a cofactor.

The catalysed reaction is an L-alpha-amino acid + O2 + H2O = a 2-oxocarboxylate + H2O2 + NH4(+). Functionally, cytotoxic L-amino acid oxidase with high oxidase activity towards DL-methionine and L-methionine, L-phenylalanine, DL-norleucine, L-isoleucine, L-arginine, L-tyrosine, and DL-leucine. Shows relatively low activity towards DL-lysine and L-lysine, DL-asparagine, DL-valine, L-histidine, DL-threonine, DL-tryptophan, and L-glutamic acid; and no activity towards L-cysteine, L-glycine, L-proline, L-oxyproline, DL-serine, and DL-aspartic acid. Does not use benzylamine, ethanolamine, diethylamine, meta- and para-phenylendiamine, ortho-, meta- and para-aminophenols, or putrescin as a substrate. Acts as a toxin by inducing chromatin condensation, as well as DNA and nucleus fragmentation, which are typical for apoptosis. Probably induces cell damage indirectly via the generation of free radicals and oxidant agents that can trigger cell impairment and apoptosis by a caspase-independent pathway. This is Cytotoxic L-amino-acid oxidase from Amanita phalloides (Death cap).